The primary structure comprises 385 residues: Succinate--CoA ligase [ADP-forming] subunit beta (385 aa).

Residues 9-244 enclose the ATP-grasp domain; it reads KEVLRKYGVS…LDEEDPKEIE (236 aa). Residues Lys-46, 53 to 55, Glu-99, Cys-102, and Glu-107 each bind ATP; that span reads GRG. Positions 199 and 213 each coordinate Mg(2+). Ser-220 is subject to Phosphoserine. Substrate is bound by residues Asn-264 and 321-323; that span reads GIM.

The protein belongs to the succinate/malate CoA ligase beta subunit family. In terms of assembly, heterotetramer of two alpha and two beta subunits. Interacts with BrxC. It depends on Mg(2+) as a cofactor.

The enzyme catalyses succinate + ATP + CoA = succinyl-CoA + ADP + phosphate. The catalysed reaction is GTP + succinate + CoA = succinyl-CoA + GDP + phosphate. It functions in the pathway carbohydrate metabolism; tricarboxylic acid cycle; succinate from succinyl-CoA (ligase route): step 1/1. In terms of biological role, succinyl-CoA synthetase functions in the citric acid cycle (TCA), coupling the hydrolysis of succinyl-CoA to the synthesis of either ATP or GTP and thus represents the only step of substrate-level phosphorylation in the TCA. The beta subunit provides nucleotide specificity of the enzyme and binds the substrate succinate, while the binding sites for coenzyme A and phosphate are found in the alpha subunit. This chain is Succinate--CoA ligase [ADP-forming] subunit beta, found in Bacillus subtilis (strain 168).